A 434-amino-acid polypeptide reads, in one-letter code: MSLLSDRQKDDLHKAMLDYLYANNHTAAFNALKESAGITYTPDPTARYTGLLEKKWTSVIRLQKKIMELENRNAALQEELSMSPARRAASQADWLPRAPAAHVLTGHRAPLTSIAFHPQYSILASASEDTTVKIWDWETGEFERTLKGHTKPVNDLDFDHKGHLLVTCSSDLFIKIWDSQNEWKNTKTFVGHDHAVSAVRFMPGDQLIVSASRDRTIRVFDVASTHQVRTLSGHSEWVRCVIPSADGTMLASGSKDQTVRLWDPLTGEPKSELRGHENDVEAVAFAPISAYAAIRELAGIPNDRTKRHGLFLASGARDKTVKLWDTQTGQMIRNLAGHDNWVRALAFHPSGKYLLSSSDDKTVRVWELSTGRCLRIVEAHSHFVAALAWGRQAAGKSGSEKKVNGVDSVDAEPEKVVNVVATGSVDETIKIWLP.

The LisH domain occupies 8-40 (QKDDLHKAMLDYLYANNHTAAFNALKESAGITY). A coiled-coil region spans residues 57-83 (TSVIRLQKKIMELENRNAALQEELSMS). WD repeat units lie at residues 106-147 (GHRA…RTLK), 149-187 (HTKP…KNTK), 191-230 (GHDH…QVRT), 233-272 (GHSE…PKSE), 275-334 (GHEN…MIRN), 337-378 (GHDN…RIVE), and 401-434 (KKVN…IWLP).

This sequence belongs to the WD repeat LIS1/nudF family. In terms of assembly, self-associates. Interacts with NDL1 and dynein.

Its subcellular location is the cytoplasm. It localises to the cytoskeleton. The protein localises to the spindle pole. Functionally, positively regulates the activity of the minus-end directed microtubule motor protein dynein. May enhance dynein-mediated microtubule sliding by targeting dynein to the microtubule plus end. Required for nuclear migration during vegetative growth as well as development. Required for retrograde early endosome (EE) transport from the hyphal tip. Required for localization of dynein to the mitotic spindle poles. Recruits additional proteins to the dynein complex at SPBs. The polypeptide is Nuclear distribution protein PAC1 (Coprinopsis cinerea (strain Okayama-7 / 130 / ATCC MYA-4618 / FGSC 9003) (Inky cap fungus)).